The following is a 299-amino-acid chain: Ectoine dioxygenase (299 aa).

Residues 1–40 (MTTTTTNVTDLYPTRGATEVATPRQDPVVWGSPDAPGPVS) are disordered. L-ectoine is bound at residue Gln-133. Residue Lys-139 coordinates 2-oxoglutarate. Fe cation is bound by residues His-150, Asp-152, and His-251.

It belongs to the PhyH family. EctD subfamily. In terms of assembly, homodimer. Fe(2+) is required as a cofactor.

The catalysed reaction is L-ectoine + 2-oxoglutarate + O2 = 5-hydroxyectoine + succinate + CO2. Its function is as follows. Involved in the biosynthesis of 5-hydroxyectoine, called compatible solute, which helps organisms to survive extreme osmotic stress by acting as a highly soluble organic osmolyte. Catalyzes the 2-oxoglutarate-dependent selective hydroxylation of L-ectoine to yield (4S,5S)-5-hydroxyectoine. The chain is Ectoine dioxygenase from Streptomyces coelicolor (strain ATCC BAA-471 / A3(2) / M145).